The chain runs to 282 residues: tRNA pseudouridine synthase B (282 aa).

Aspartate 36 serves as the catalytic Nucleophile.

The protein belongs to the pseudouridine synthase TruB family. Type 1 subfamily.

The enzyme catalyses uridine(55) in tRNA = pseudouridine(55) in tRNA. Its function is as follows. Responsible for synthesis of pseudouridine from uracil-55 in the psi GC loop of transfer RNAs. This chain is tRNA pseudouridine synthase B, found in Mycoplasmopsis pulmonis (strain UAB CTIP) (Mycoplasma pulmonis).